Here is a 52-residue protein sequence, read N- to C-terminus: ATP synthase protein 8 (52 aa).

A helical transmembrane segment spans residues 7–23 (MMWFSLFIMFSMTMMLF).

It belongs to the ATPase protein 8 family. As to quaternary structure, F-type ATPases have 2 components, CF(1) - the catalytic core - and CF(0) - the membrane proton channel.

Its subcellular location is the mitochondrion membrane. In terms of biological role, mitochondrial membrane ATP synthase (F(1)F(0) ATP synthase or Complex V) produces ATP from ADP in the presence of a proton gradient across the membrane which is generated by electron transport complexes of the respiratory chain. F-type ATPases consist of two structural domains, F(1) - containing the extramembraneous catalytic core and F(0) - containing the membrane proton channel, linked together by a central stalk and a peripheral stalk. During catalysis, ATP synthesis in the catalytic domain of F(1) is coupled via a rotary mechanism of the central stalk subunits to proton translocation. Part of the complex F(0) domain. Minor subunit located with subunit a in the membrane. In Locusta migratoria (Migratory locust), this protein is ATP synthase protein 8 (MT-ATP8).